The primary structure comprises 608 residues: Bifunctional lycopene cyclase/phytoene synthase (608 aa).

The tract at residues 1 to 240 is lycopene beta-cyclase; sequence MSILTYLEFH…LVFATCAIDR (240 aa). 7 helical membrane-spanning segments follow: residues 3–23, 37–56, 80–97, 117–137, 150–170, 175–195, and 218–238; these read ILTY…ALCW, YKFL…NYIV, YMFF…SNFV, LLVR…AWHL, ILWY…EYIL, AVLL…IVAI, and VEEC…TCAI. Residues 247–608 are phytoene synthase; the sequence is LYKSSVQNQN…ARKIKSFFVD (362 aa).

It in the N-terminal section; belongs to the lycopene beta-cyclase family. In the C-terminal section; belongs to the phytoene/squalene synthase family.

Its subcellular location is the membrane. The catalysed reaction is all-trans-lycopene = gamma-carotene. It catalyses the reaction gamma-carotene = all-trans-beta-carotene. It carries out the reaction 2 (2E,6E,10E)-geranylgeranyl diphosphate = 15-cis-phytoene + 2 diphosphate. It participates in carotenoid biosynthesis; beta-carotene biosynthesis. The protein operates within carotenoid biosynthesis; phytoene biosynthesis; all-trans-phytoene from geranylgeranyl diphosphate: step 1/1. In terms of biological role, bifunctional enzyme that catalyzes the reactions from geranylgeranyl diphosphate to phytoene (phytoene synthase) and lycopene to beta-carotene via the intermediate gamma-carotene (lycopene cyclase). The protein is Bifunctional lycopene cyclase/phytoene synthase of Blakeslea trispora (Choanephora trispora).